Here is a 93-residue protein sequence, read N- to C-terminus: Integration host factor subunit beta (93 aa).

Belongs to the bacterial histone-like protein family. As to quaternary structure, heterodimer of an alpha and a beta chain.

Its function is as follows. This protein is one of the two subunits of integration host factor, a specific DNA-binding protein that functions in genetic recombination as well as in transcriptional and translational control. This chain is Integration host factor subunit beta (ihfB), found in Mannheimia haemolytica (Pasteurella haemolytica).